The chain runs to 521 residues: MLKQKKFFISTPIYYSSGNPHIGHAYTTIIADVLARYKRLFGYDVFFLTGMDEHGQKIQQKAFEENISPKALVDRNSIIFLNLWKRLNISFSKFIRTTQMDHEESVQKVFSYLYKQGKIYLGQWTGYYCVSCEENYNPAEIIKSQDNIMLCRMGHKLETKSEESYFYKMSDQAPFLKTYYQNHPNFIIPNERANEMVNNFLNNLEDLSISRTTFDWGIPIAENPKHVIYVWLDALMNYLTATGYLSNNEELFQKYWCDNETEIVHLLSKEIARFHCIYWPIFLNDLQIRFPSTILSHGWIITKEGKMSKSLGNVIDPNVLIDTYGVDALRYYLMADLSLFRDAIFSEDNLIETYNTQLANSYGNMISRTLGMLKKYRNNIVPKYVGCVLKNDEKLENLINKNIELVQENINKYSIDKALNCIQEILVEANKYIEDNKPWELAKNQQEQELDSLLVHLVKVIQVTTTLLSPILIEGSKKAVEQLNFDESFLTLASLASYDIFNYHKVNDSKPIFARIIVEKQ.

A 'HIGH' region motif is present at residues 14–24; sequence YYSSGNPHIGH. Residues Cys129, Cys132, Cys151, and His155 each coordinate Zn(2+). The 'KMSKS' region signature appears at 306-310; that stretch reads KMSKS. Lys309 serves as a coordination point for ATP.

Belongs to the class-I aminoacyl-tRNA synthetase family. MetG type 2A subfamily. Monomer. The cofactor is Zn(2+).

Its subcellular location is the cytoplasm. It catalyses the reaction tRNA(Met) + L-methionine + ATP = L-methionyl-tRNA(Met) + AMP + diphosphate. Functionally, is required not only for elongation of protein synthesis but also for the initiation of all mRNA translation through initiator tRNA(fMet) aminoacylation. This is Methionine--tRNA ligase from Ureaplasma parvum serovar 3 (strain ATCC 700970).